Consider the following 62-residue polypeptide: Antitoxin VbhA (62 aa).

The Inhibitory (S/T)XXXE(G/N) motif motif lies at 20–25 (SQRLEG). Glu-24 lines the ATP pocket.

As to quaternary structure, interacts with VbhT.

Antitoxin component of type II toxin-antitoxin (TA) system VbhT-VbhA. Acts by inhibiting the adenylyltransferase activity of VbhT; competes with ATP-binding and prevents productive ATP-binding to VbhT. In Bartonella schoenbuchensis (strain DSM 13525 / NCTC 13165 / R1), this protein is Antitoxin VbhA.